We begin with the raw amino-acid sequence, 393 residues long: DNA primase small subunit PriS (393 aa).

Catalysis depends on residues Asp-100, Asp-102, and Asp-296.

The protein belongs to the eukaryotic-type primase small subunit family. As to quaternary structure, heterodimer of a small subunit (PriS) and a large subunit (PriL). Mg(2+) is required as a cofactor. The cofactor is Mn(2+).

In terms of biological role, catalytic subunit of DNA primase, an RNA polymerase that catalyzes the synthesis of short RNA molecules used as primers for DNA polymerase during DNA replication. The small subunit contains the primase catalytic core and has DNA synthesis activity on its own. Binding to the large subunit stabilizes and modulates the activity, increasing the rate of DNA synthesis while decreasing the length of the DNA fragments, and conferring RNA synthesis capability. The DNA polymerase activity may enable DNA primase to also catalyze primer extension after primer synthesis. May also play a role in DNA repair. This is DNA primase small subunit PriS from Natronomonas pharaonis (strain ATCC 35678 / DSM 2160 / CIP 103997 / JCM 8858 / NBRC 14720 / NCIMB 2260 / Gabara) (Halobacterium pharaonis).